The sequence spans 192 residues: Inosine triphosphate pyrophosphatase (192 aa).

ITP is bound at residue 10–15 (TGNANK). Residue Glu-43 participates in Mg(2+) binding. ITP-binding positions include Lys-56, 74–75 (DT), Lys-91, 149–152 (FGWD), Lys-173, and 178–179 (HR).

This sequence belongs to the HAM1 NTPase family. As to quaternary structure, homodimer. Requires Mg(2+) as cofactor. The cofactor is Mn(2+).

It is found in the cytoplasm. The protein localises to the nucleus. The catalysed reaction is ITP + H2O = IMP + diphosphate + H(+). The enzyme catalyses dITP + H2O = dIMP + diphosphate + H(+). It carries out the reaction XTP + H2O = XMP + diphosphate + H(+). Pyrophosphatase that hydrolyzes non-canonical purine nucleotides such as inosine triphosphate (ITP), deoxyinosine triphosphate (dITP) or xanthosine 5'-triphosphate (XTP) to their respective monophosphate derivatives. The enzyme does not distinguish between the deoxy- and ribose forms. Probably excludes non-canonical purines from RNA and DNA precursor pools, thus preventing their incorporation into RNA and DNA and avoiding chromosomal lesions. The chain is Inosine triphosphate pyrophosphatase from Candida glabrata (strain ATCC 2001 / BCRC 20586 / JCM 3761 / NBRC 0622 / NRRL Y-65 / CBS 138) (Yeast).